Reading from the N-terminus, the 100-residue chain is uncharacterized protein (100 aa).

This is an uncharacterized protein from Saccharomyces cerevisiae (strain ATCC 204508 / S288c) (Baker's yeast).